The sequence spans 322 residues: NADH-quinone oxidoreductase subunit H (322 aa).

Transmembrane regions (helical) follow at residues 15-35 (ILHI…LSIL), 82-102 (IFIL…PTIP), 114-134 (IGIL…LFAG), 149-169 (ASAQ…GVIA), 186-206 (VWNV…GIAL), 243-263 (ISII…YFGF), 265-285 (GSSF…FILI), and 302-322 (WKIC…FILI).

The protein belongs to the complex I subunit 1 family. NDH-1 is composed of 13 different subunits. Subunits NuoA, H, J, K, L, M, N constitute the membrane sector of the complex.

The protein resides in the cell membrane. It catalyses the reaction a quinone + NADH + 5 H(+)(in) = a quinol + NAD(+) + 4 H(+)(out). Its function is as follows. NDH-1 shuttles electrons from NADH, via FMN and iron-sulfur (Fe-S) centers, to quinones in the respiratory chain. The immediate electron acceptor for the enzyme in this species is believed to be ubiquinone. Couples the redox reaction to proton translocation (for every two electrons transferred, four hydrogen ions are translocated across the cytoplasmic membrane), and thus conserves the redox energy in a proton gradient. This subunit may bind ubiquinone. The polypeptide is NADH-quinone oxidoreductase subunit H (Buchnera aphidicola subsp. Schizaphis graminum (strain Sg)).